A 140-amino-acid chain; its full sequence is Small ribosomal subunit protein uS9A (140 aa).

Belongs to the universal ribosomal protein uS9 family. As to quaternary structure, component of the small ribosomal subunit (SSU). Mature yeast ribosomes consist of a small (40S) and a large (60S) subunit. The 40S small subunit contains 1 molecule of ribosomal RNA (18S rRNA) and at least 33 different proteins. The large 60S subunit contains 3 rRNA molecules (25S, 5.8S and 5S rRNA) and at least 46 different proteins.

It is found in the cytoplasm. In terms of biological role, component of the ribosome, a large ribonucleoprotein complex responsible for the synthesis of proteins in the cell. The small ribosomal subunit (SSU) binds messenger RNAs (mRNAs) and translates the encoded message by selecting cognate aminoacyl-transfer RNA (tRNA) molecules. The large subunit (LSU) contains the ribosomal catalytic site termed the peptidyl transferase center (PTC), which catalyzes the formation of peptide bonds, thereby polymerizing the amino acids delivered by tRNAs into a polypeptide chain. The nascent polypeptides leave the ribosome through a tunnel in the LSU and interact with protein factors that function in enzymatic processing, targeting, and the membrane insertion of nascent chains at the exit of the ribosomal tunnel. The chain is Small ribosomal subunit protein uS9A (rps1601) from Schizosaccharomyces pombe (strain 972 / ATCC 24843) (Fission yeast).